Reading from the N-terminus, the 365-residue chain is DNA replication and repair protein RecF (365 aa).

An ATP-binding site is contributed by 30 to 37; sequence GDNGEGKT.

This sequence belongs to the RecF family.

The protein resides in the cytoplasm. Functionally, the RecF protein is involved in DNA metabolism; it is required for DNA replication and normal SOS inducibility. RecF binds preferentially to single-stranded, linear DNA. It also seems to bind ATP. This is DNA replication and repair protein RecF from Leptospira interrogans serogroup Icterohaemorrhagiae serovar Lai (strain 56601).